The primary structure comprises 358 residues: UDP-3-O-acylglucosamine N-acyltransferase (358 aa).

Catalysis depends on H252, which acts as the Proton acceptor.

This sequence belongs to the transferase hexapeptide repeat family. LpxD subfamily. As to quaternary structure, homotrimer.

It carries out the reaction a UDP-3-O-[(3R)-3-hydroxyacyl]-alpha-D-glucosamine + a (3R)-hydroxyacyl-[ACP] = a UDP-2-N,3-O-bis[(3R)-3-hydroxyacyl]-alpha-D-glucosamine + holo-[ACP] + H(+). The protein operates within bacterial outer membrane biogenesis; LPS lipid A biosynthesis. Catalyzes the N-acylation of UDP-3-O-acylglucosamine using 3-hydroxyacyl-ACP as the acyl donor. Is involved in the biosynthesis of lipid A, a phosphorylated glycolipid that anchors the lipopolysaccharide to the outer membrane of the cell. This Paraburkholderia phymatum (strain DSM 17167 / CIP 108236 / LMG 21445 / STM815) (Burkholderia phymatum) protein is UDP-3-O-acylglucosamine N-acyltransferase.